The sequence spans 240 residues: Adenylate dimethylallyltransferase (240 aa).

Belongs to the isopentenyl transferase family.

The catalysed reaction is dimethylallyl diphosphate + AMP = N(6)-(dimethylallyl)adenosine 5'-phosphate + diphosphate. Its function is as follows. Transfers dimethylallyl groups to AMP as part of the biosynthesis of cytokinin phytohormones. This Agrobacterium fabrum (strain C58 / ATCC 33970) (Agrobacterium tumefaciens (strain C58)) protein is Adenylate dimethylallyltransferase (izt).